Reading from the N-terminus, the 733-residue chain is E3 ubiquitin-protein ligase COP1 (733 aa).

The tract at residues 1–43 (MSGSRQAGSGSAGTSPGSSAASSVTSASSSLSSSPSPPSVAAS) is disordered. A Nuclear localization signal 1 motif is present at residues 111–115 (SSRKR). The segment at 138-176 (CPICFDMIEEAYMTKCGHSFCYKCIHQSLEDNNRCPKCN) adopts an RING-type zinc-finger fold. Residues 197-208 (KQKQRFEEKRFK) carry the Nuclear localization signal 2 motif. The stretch at 231–306 (DQDNLDLANV…RVEEMSGLYS (76 aa)) forms a coiled coil. The Nuclear export signal signature appears at 237 to 247 (LANVNLMLELL). The segment at 307–327 (PVSEDSTVPQFEAPSPSHSSI) is disordered. WD repeat units follow at residues 421–460 (NGSSIVSSIEFDRDCDYFAIAGVTKKIKVYEYGTVIQDAV), 470–510 (TCNS…RSKV), 513–553 (EHEK…SVAS), 555–595 (EAKA…QPIM), 599–637 (GHRKAVSYAKFVSGEEIVSASTDSQLKLWNVGKPYCLRS), 640–679 (GHINEKNFVGLASNGDYIACGSENNSLYLYYKGLSKTLLT), and 695–731 (EDDTNEFVSAVCWRALSDGESNVLIAANSQGTIKVLE). Residues 645-647 (KNF) are interaction with TRIB1.

Belongs to the COP1 family. In terms of assembly, homodimer. Homodimerization is mediated by the coiled coil domain. Component of the DCX DET1-COP1 ubiquitin ligase complex at least composed of RBX1, DET1, DDB1, CUL4A and COP1. Isoform 2 does not interact with CUL4A but still binds to RBX1, suggesting that the interaction may be mediated by another cullin protein. Isoform 1 and isoform 2 interact with CUL5 but not with CUL1, CUL2 not CUL3. Interacts with bZIP transcription factors JUN, JUNB and JUND but not with FOS, ATF2 nor XBP1. Interacts with p53 (TP53). Interacts with COPS6; this interaction stabilizes RFWD2 through reducing its auto-ubiquitination and decelerating its turnover rate. Interacts with SFN; this interaction leads to SFN degradation. Interacts with p53/TP53 and MTA1. Interacts with TRIB1 (via C-terminus) and TRIB2.

The protein localises to the nucleus speckle. It localises to the cytoplasm. It catalyses the reaction S-ubiquitinyl-[E2 ubiquitin-conjugating enzyme]-L-cysteine + [acceptor protein]-L-lysine = [E2 ubiquitin-conjugating enzyme]-L-cysteine + N(6)-ubiquitinyl-[acceptor protein]-L-lysine.. The protein operates within protein modification; protein ubiquitination. With respect to regulation, TRIB1 competes with substrates for RFWD2 binding. Its function is as follows. E3 ubiquitin-protein ligase that mediates ubiquitination and subsequent proteasomal degradation of target proteins. E3 ubiquitin ligases accept ubiquitin from an E2 ubiquitin-conjugating enzyme in the form of a thioester and then directly transfers the ubiquitin to targeted substrates. Involved in JUN ubiquitination and degradation. Directly involved in p53 (TP53) ubiquitination and degradation, thereby abolishing p53-dependent transcription and apoptosis. Ubiquitinates p53 independently of MDM2 or RCHY1. Probably mediates E3 ubiquitin ligase activity by functioning as the essential RING domain subunit of larger E3 complexes. In contrast, it does not constitute the catalytic RING subunit in the DCX DET1-COP1 complex that negatively regulates JUN, the ubiquitin ligase activity being mediated by RBX1. Involved in 14-3-3 protein sigma/SFN ubiquitination and proteasomal degradation, leading to AKT activation and promotion of cell survival. Ubiquitinates MTA1 leading to its proteasomal degradation. Upon binding to TRIB1, ubiquitinates CEBPA, which lacks a canonical COP1-binding motif. The polypeptide is E3 ubiquitin-protein ligase COP1 (Mus musculus (Mouse)).